Here is an 824-residue protein sequence, read N- to C-terminus: Protein-glutamine gamma-glutamyltransferase K (824 aa).

Residues 1–10 are compositionally biased toward basic and acidic residues; sequence MEGPRSDVGR. 2 disordered regions span residues 1 to 44 and 61 to 110; these read MEGP…GGRS and DDWG…AAGD. Residue Thr-20 is modified to Phosphothreonine. A phosphoserine mark is found at Ser-22, Ser-70, Ser-92, Ser-100, and Ser-103. Residues 65–76 are compositionally biased toward low complexity; sequence PEPSGSRSRGTS. The segment covering 85–100 has biased composition (basic and acidic residues); that stretch reads GDSRGRDSRGGRRPES. Active-site residues include Cys-385, His-444, and Asp-467. Ca(2+) is bound by residues Asn-507, Asp-509, Glu-556, and Glu-561. The segment at 801–824 is disordered; it reads RGFSEAVGDSRSGENIPMAFRGGA. At Ser-812 the chain carries Phosphoserine.

It belongs to the transglutaminase superfamily. Transglutaminase family. In terms of assembly, interacts with PLAAT4. Requires Ca(2+) as cofactor. In terms of processing, palmitoylated. The membrane anchorage region possesses a cluster of five cysteines within which fatty acid(s) may become thioester-linked. It is subject to phorbol ester-stimulated phosphorylation and is hypersensitive to proteolysis, which releases the enzyme in a soluble form. Post-translationally, tyrosine-phosphorylated.

Its subcellular location is the membrane. It catalyses the reaction L-glutaminyl-[protein] + L-lysyl-[protein] = [protein]-L-lysyl-N(6)-5-L-glutamyl-[protein] + NH4(+). Catalyzes the cross-linking of proteins and the conjugation of polyamines to proteins. Responsible for cross-linking epidermal proteins during formation of the stratum corneum. Involved in cell proliferation. This is Protein-glutamine gamma-glutamyltransferase K (Tgm1) from Rattus norvegicus (Rat).